Consider the following 321-residue polypeptide: Methionyl-tRNA formyltransferase (321 aa).

113–116 is a binding site for (6S)-5,6,7,8-tetrahydrofolate; that stretch reads SILP.

It belongs to the Fmt family.

It carries out the reaction L-methionyl-tRNA(fMet) + (6R)-10-formyltetrahydrofolate = N-formyl-L-methionyl-tRNA(fMet) + (6S)-5,6,7,8-tetrahydrofolate + H(+). Functionally, attaches a formyl group to the free amino group of methionyl-tRNA(fMet). The formyl group appears to play a dual role in the initiator identity of N-formylmethionyl-tRNA by promoting its recognition by IF2 and preventing the misappropriation of this tRNA by the elongation apparatus. The sequence is that of Methionyl-tRNA formyltransferase from Vibrio atlanticus (strain LGP32) (Vibrio splendidus (strain Mel32)).